The following is a 204-amino-acid chain: N-(5'-phosphoribosyl)anthranilate isomerase (204 aa).

Belongs to the TrpF family.

The enzyme catalyses N-(5-phospho-beta-D-ribosyl)anthranilate = 1-(2-carboxyphenylamino)-1-deoxy-D-ribulose 5-phosphate. Its pathway is amino-acid biosynthesis; L-tryptophan biosynthesis; L-tryptophan from chorismate: step 3/5. This Bacillus cereus (strain Q1) protein is N-(5'-phosphoribosyl)anthranilate isomerase.